Consider the following 526-residue polypeptide: Na(+)/H(+) antiporter NhaB (526 aa).

Helical transmembrane passes span 25–45 (ILLF…AAGW), 52–72 (IFTL…LLAI), 89–109 (LVAN…IYFM), 130–164 (LSLA…FYAI), 204–224 (LMMH…VGEP), 242–262 (IRMA…CILV), 305–325 (AVIA…VGLI), 350–370 (QEAL…AVII), 391–411 (LALF…VFVG), 448–468 (VATP…LAPL), 479–499 (MALP…ELLL), and 505–525 (WFYQ…LPAL).

The protein belongs to the NhaB Na(+)/H(+) (TC 2.A.34) antiporter family.

It is found in the cell inner membrane. The catalysed reaction is 2 Na(+)(in) + 3 H(+)(out) = 2 Na(+)(out) + 3 H(+)(in). In terms of biological role, na(+)/H(+) antiporter that extrudes sodium in exchange for external protons. In Aeromonas salmonicida (strain A449), this protein is Na(+)/H(+) antiporter NhaB.